Here is a 308-residue protein sequence, read N- to C-terminus: Ribosomal RNA small subunit methyltransferase H (308 aa).

Residues 35 to 37 (GGH), D54, F80, D101, and Q108 contribute to the S-adenosyl-L-methionine site.

The protein belongs to the methyltransferase superfamily. RsmH family.

The protein localises to the cytoplasm. It carries out the reaction cytidine(1402) in 16S rRNA + S-adenosyl-L-methionine = N(4)-methylcytidine(1402) in 16S rRNA + S-adenosyl-L-homocysteine + H(+). Specifically methylates the N4 position of cytidine in position 1402 (C1402) of 16S rRNA. This is Ribosomal RNA small subunit methyltransferase H from Mycoplasma pneumoniae (strain ATCC 29342 / M129 / Subtype 1) (Mycoplasmoides pneumoniae).